The primary structure comprises 137 residues: Large ribosomal subunit protein uL16 (137 aa).

The protein belongs to the universal ribosomal protein uL16 family. Part of the 50S ribosomal subunit.

In terms of biological role, binds 23S rRNA and is also seen to make contacts with the A and possibly P site tRNAs. The chain is Large ribosomal subunit protein uL16 from Baumannia cicadellinicola subsp. Homalodisca coagulata.